We begin with the raw amino-acid sequence, 32 residues long: Cytochrome b6-f complex subunit 6 (32 aa).

Residues 6–26 (VFYIVFIALFFGIAVGIIFAI) form a helical membrane-spanning segment.

It belongs to the PetL family. As to quaternary structure, the 4 large subunits of the cytochrome b6-f complex are cytochrome b6, subunit IV (17 kDa polypeptide, PetD), cytochrome f and the Rieske protein, while the 4 small subunits are PetG, PetL, PetM and PetN. The complex functions as a dimer.

It localises to the cellular thylakoid membrane. Component of the cytochrome b6-f complex, which mediates electron transfer between photosystem II (PSII) and photosystem I (PSI), cyclic electron flow around PSI, and state transitions. PetL is important for photoautotrophic growth as well as for electron transfer efficiency and stability of the cytochrome b6-f complex. This is Cytochrome b6-f complex subunit 6 from Mastigocladus laminosus (Fischerella sp.).